Here is a 76-residue protein sequence, read N- to C-terminus: UPF0154 protein Exig_1099 (76 aa).

Residues 4–24 (WIWILIALLCLVAGVALGFYI) traverse the membrane as a helical segment. The interval 54 to 76 (KPSQKKVNQVMRSMSGSMKSPKK) is disordered.

It belongs to the UPF0154 family.

It is found in the cell membrane. This is UPF0154 protein Exig_1099 from Exiguobacterium sibiricum (strain DSM 17290 / CCUG 55495 / CIP 109462 / JCM 13490 / 255-15).